A 196-amino-acid polypeptide reads, in one-letter code: Protein hunchback (196 aa).

2 disordered regions span residues 16–60 and 90–196; these read SHHH…NTNL and AMTP…KYMA. Residues 17-30 are compositionally biased toward basic residues; that stretch reads HHHHHHHAHHSYHQ. The segment covering 92–103 has biased composition (polar residues); sequence TPSSSNNDQNSP. Residues 125-144 show a composition bias toward low complexity; the sequence is PTATTTTTPAAAAPTTTAAT. Basic and acidic residues predominate over residues 176-196; it reads AEREKEHDLMSNSSEDMKYMA.

This sequence belongs to the hunchback C2H2-type zinc-finger protein family.

The protein localises to the nucleus. Gap class segmentation protein that controls development of head structures. This Drosophila silvestris (Fruit fly) protein is Protein hunchback (hb).